The chain runs to 199 residues: N-(5'-phosphoribosyl)anthranilate isomerase (199 aa).

This sequence belongs to the TrpF family.

It carries out the reaction N-(5-phospho-beta-D-ribosyl)anthranilate = 1-(2-carboxyphenylamino)-1-deoxy-D-ribulose 5-phosphate. Its pathway is amino-acid biosynthesis; L-tryptophan biosynthesis; L-tryptophan from chorismate: step 3/5. This is N-(5'-phosphoribosyl)anthranilate isomerase from Lacticaseibacillus paracasei (strain ATCC 334 / BCRC 17002 / CCUG 31169 / CIP 107868 / KCTC 3260 / NRRL B-441) (Lactobacillus paracasei).